The following is a 68-amino-acid chain: Ribosome modulation factor (68 aa).

It belongs to the ribosome modulation factor family.

The protein resides in the cytoplasm. In terms of biological role, during stationary phase, converts 70S ribosomes to an inactive dimeric form (100S ribosomes). The protein is Ribosome modulation factor of Saccharophagus degradans (strain 2-40 / ATCC 43961 / DSM 17024).